Reading from the N-terminus, the 166-residue chain is Small ribosomal subunit protein uS5 (166 aa).

Residues 11-74 form the S5 DRBM domain; that stretch reads LQEKLISVNR…DKARKNMIII (64 aa).

This sequence belongs to the universal ribosomal protein uS5 family. As to quaternary structure, part of the 30S ribosomal subunit. Contacts proteins S4 and S8.

Functionally, with S4 and S12 plays an important role in translational accuracy. Its function is as follows. Located at the back of the 30S subunit body where it stabilizes the conformation of the head with respect to the body. In Wigglesworthia glossinidia brevipalpis, this protein is Small ribosomal subunit protein uS5.